The chain runs to 227 residues: Octanoyltransferase (227 aa).

In terms of domain architecture, BPL/LPL catalytic spans 31-209 (ANTIDEIWLV…VFLSLLGGTN (179 aa)). Residues 71–78 (RGGKITYH), 139–141 (SIG), and 152–154 (GLA) each bind substrate. C170 acts as the Acyl-thioester intermediate in catalysis.

It belongs to the LipB family.

The protein localises to the cytoplasm. It catalyses the reaction octanoyl-[ACP] + L-lysyl-[protein] = N(6)-octanoyl-L-lysyl-[protein] + holo-[ACP] + H(+). The protein operates within protein modification; protein lipoylation via endogenous pathway; protein N(6)-(lipoyl)lysine from octanoyl-[acyl-carrier-protein]: step 1/2. Catalyzes the transfer of endogenously produced octanoic acid from octanoyl-acyl-carrier-protein onto the lipoyl domains of lipoate-dependent enzymes. Lipoyl-ACP can also act as a substrate although octanoyl-ACP is likely to be the physiological substrate. This Baumannia cicadellinicola subsp. Homalodisca coagulata protein is Octanoyltransferase.